The sequence spans 234 residues: Isoprenyl transferase (234 aa).

Asp13 is a catalytic residue. Asp13 provides a ligand contact to Mg(2+). Residues 14 to 17 (GNGR), Trp18, Arg26, His30, and 58 to 60 (STE) each bind substrate. Asn61 acts as the Proton acceptor in catalysis. Substrate is bound by residues Trp62, Arg64, Arg180, and 186–188 (RLS). Glu199 is a Mg(2+) binding site.

Belongs to the UPP synthase family. As to quaternary structure, homodimer. It depends on Mg(2+) as a cofactor.

Functionally, catalyzes the condensation of isopentenyl diphosphate (IPP) with allylic pyrophosphates generating different type of terpenoids. The chain is Isoprenyl transferase (uppS) from Helicobacter pylori (strain ATCC 700392 / 26695) (Campylobacter pylori).